A 431-amino-acid chain; its full sequence is Trigger factor (431 aa).

The PPIase FKBP-type domain maps to 165–250; it reads GDTVVIDFDG…IHELKRKELP (86 aa).

Belongs to the FKBP-type PPIase family. Tig subfamily.

Its subcellular location is the cytoplasm. The catalysed reaction is [protein]-peptidylproline (omega=180) = [protein]-peptidylproline (omega=0). In terms of biological role, involved in protein export. Acts as a chaperone by maintaining the newly synthesized protein in an open conformation. Functions as a peptidyl-prolyl cis-trans isomerase. The sequence is that of Trigger factor from Leuconostoc citreum (strain KM20).